Reading from the N-terminus, the 98-residue chain is Large ribosomal subunit protein eL21 (98 aa).

Belongs to the eukaryotic ribosomal protein eL21 family.

The sequence is that of Large ribosomal subunit protein eL21 from Korarchaeum cryptofilum (strain OPF8).